Reading from the N-terminus, the 318-residue chain is MKCNDKMVVIMGATGSGKSSLSVDLALHFKAEIINSDKMQFYDGLKITTNQSTIEDRRGVPHHLLGELNPEAGEVTAAEFRVMAAEAISEITQRKKLPILAGGSNSYIHALLAKSYDPENYPFSDHKGSICSELKYDCCFIWIDVDQSVLFEYLSLRLDLMMKSGMFEEIAEFHRSKKAPKEPLGIWKAIGVQEFDDYLKMYKWDNDMDKWDPMRKEAYEKAVRAIKENTFQLTKDQITKINKLRNAGWDIKKVDATASFREAIRAAKEGEGVAEMQRKIWNKEVLEPCVKIVRSHLDQPINYYYYYFYLLKRFLSLN.

ATP is bound at residue 12–19 (GATGSGKS).

The protein belongs to the IPP transferase family. Requires Mg(2+) as cofactor. Expressed in immature seeds with highest expression in the chalazal endosperm.

It localises to the cytoplasm. It catalyses the reaction dimethylallyl diphosphate + ADP = N(6)-(dimethylallyl)adenosine 5'-diphosphate + diphosphate. The enzyme catalyses dimethylallyl diphosphate + ATP = N(6)-(dimethylallyl)adenosine 5'-triphosphate + diphosphate. Involved in cytokinin biosynthesis. Catalyzes the transfer of an isopentenyl group from dimethylallyl diphosphate (DMAPP) to ATP and ADP, but not to AMP. Has no DMAPP:tRNA isopentenyltransferase activity. The chain is Adenylate isopentenyltransferase 4 (IPT4) from Arabidopsis thaliana (Mouse-ear cress).